The primary structure comprises 669 residues: Zinc finger CCCH domain-containing protein 17 (669 aa).

Low complexity predominate over residues 1–11 (MFAPATQPQQQ). The disordered stretch occupies residues 1 to 23 (MFAPATQPQQQHEQKKQSETVSS). 3 consecutive C3H1-type zinc fingers follow at residues 34-58 (DCVY…HSEY), 60-86 (RMNP…HPPL), and 114-141 (AKQP…HTPN). Disordered regions lie at residues 150-175 (PVEA…EKKL), 285-306 (VEDR…PDFS), 376-589 (GMRL…VMEE), and 642-669 (EEGE…EMLS). Basic and acidic residues-rich tracts occupy residues 164–175 (KPIENNTEEKKL), 285–299 (VEDR…RGNS), 392–406 (SMDR…DTPR), 420–464 (KLRE…EENH), 478–499 (RRRE…ESKP), and 547–579 (NNKD…PKAE). 2 stretches are compositionally biased toward acidic residues: residues 580 to 589 (VEEEGTVMEE) and 642 to 659 (EEGE…GEED). The segment covering 660 to 669 (IEKKTVEMLS) has biased composition (basic and acidic residues).

The protein is Zinc finger CCCH domain-containing protein 17 of Arabidopsis thaliana (Mouse-ear cress).